The primary structure comprises 139 residues: Cystatin-11 (139 aa).

Positions 1–28 are cleaved as a signal peptide; sequence MAAGSWKATRLLLAILVALVAFSYQVKR. 2 cysteine pairs are disulfide-bonded: cysteine 94-cysteine 102 and cysteine 115-cysteine 135. A glycan (N-linked (GlcNAc...) asparagine) is linked at asparagine 134.

The protein belongs to the cystatin family. As to expression, expressed in epididymis, where it localizes to the proximal caput and also part of the midcaput. Not detected in other tissues tested.

The protein localises to the secreted. Its function is as follows. Has antibacterial activity against the Gram-negative bacteria E.coli. May play a role in sperm maturation and fertilization. The chain is Cystatin-11 from Mus musculus (Mouse).